The sequence spans 79 residues: Acyl carrier protein (79 aa).

The Carrier domain occupies 3–78 (QEILEKVCSI…DAVKFIEEKK (76 aa)). S38 is subject to O-(pantetheine 4'-phosphoryl)serine.

Belongs to the acyl carrier protein (ACP) family. In terms of processing, 4'-phosphopantetheine is transferred from CoA to a specific serine of apo-ACP by AcpS. This modification is essential for activity because fatty acids are bound in thioester linkage to the sulfhydryl of the prosthetic group.

It is found in the cytoplasm. Its pathway is lipid metabolism; fatty acid biosynthesis. In terms of biological role, carrier of the growing fatty acid chain in fatty acid biosynthesis. The sequence is that of Acyl carrier protein from Prochlorococcus marinus (strain MIT 9301).